A 172-amino-acid chain; its full sequence is Bcl-2-related protein A1 (172 aa).

The BH1 motif lies at 77-97 (KEFEDGIINWGRIVTIFAFGG). The BH2 signature appears at 132–147 (EWIRQNGGWEDGFIKK).

Belongs to the Bcl-2 family. Interacts directly with BCL2L11/BIM and PMAIP1. Interacts directly with BAK1, BID, BMF and BBC3. Interacts with BOP. Interacts with isoform 3, isoform 4 and isoform 5 of ING4. Interacts with UBQLN4. As to expression, expressed in hemopoietic tissues, including bone marrow, spleen and thymus.

It localises to the cytoplasm. Its function is as follows. Retards apoptosis induced by IL-3 deprivation. May function in the response of hemopoietic cells to external signals and in maintaining endothelial survival during infection. Can inhibit apoptosis induced by serum starvation in the mammary epithelial cell line HC11. The sequence is that of Bcl-2-related protein A1 (Bcl2a1) from Mus musculus (Mouse).